We begin with the raw amino-acid sequence, 210 residues long: Thymidylate kinase (210 aa).

Residue 10-17 (GPEGAGKS) participates in ATP binding.

The protein belongs to the thymidylate kinase family.

The enzyme catalyses dTMP + ATP = dTDP + ADP. Its function is as follows. Phosphorylation of dTMP to form dTDP in both de novo and salvage pathways of dTTP synthesis. The sequence is that of Thymidylate kinase from Pseudomonas fluorescens (strain Pf0-1).